We begin with the raw amino-acid sequence, 288 residues long: ATP synthase gamma chain (288 aa).

It belongs to the ATPase gamma chain family. As to quaternary structure, F-type ATPases have 2 components, CF(1) - the catalytic core - and CF(0) - the membrane proton channel. CF(1) has five subunits: alpha(3), beta(3), gamma(1), delta(1), epsilon(1). CF(0) has three main subunits: a, b and c.

Its subcellular location is the cell membrane. Its function is as follows. Produces ATP from ADP in the presence of a proton gradient across the membrane. The gamma chain is believed to be important in regulating ATPase activity and the flow of protons through the CF(0) complex. The sequence is that of ATP synthase gamma chain from Staphylococcus haemolyticus (strain JCSC1435).